Consider the following 500-residue polypeptide: Abscisic acid 8'-hydroxylase 3 (500 aa).

A helical membrane pass occupies residues 3 to 23; the sequence is ASFVIVIVISFFISLAFMCYV. Cys-426 is a heme binding site.

This sequence belongs to the cytochrome P450 family. It depends on heme as a cofactor.

It is found in the membrane. The catalysed reaction is 2-cis-(+)-abscisate + reduced [NADPH--hemoprotein reductase] + O2 = (+)-8'-hydroxyabscisate + oxidized [NADPH--hemoprotein reductase] + H2O + H(+). The protein operates within plant hormone degradation; abscisic acid degradation. In terms of biological role, involved in the oxidative degradation of abscisic acid. The chain is Abscisic acid 8'-hydroxylase 3 (CYP707A7) from Oryza sativa subsp. japonica (Rice).